Here is a 91-residue protein sequence, read N- to C-terminus: Small membrane A-kinase anchor protein (91 aa).

The N-myristoyl glycine moiety is linked to residue Gly-2.

This sequence belongs to the small membrane AKAP family. Post-translationally, may be palmitoylated at Cys-3.

It is found in the cell membrane. In terms of biological role, binds to type I regulatory subunits of protein kinase A and may anchor/target them to the plasma membrane. This is Small membrane A-kinase anchor protein from Xenopus tropicalis (Western clawed frog).